Reading from the N-terminus, the 298-residue chain is Exosome complex component Rrp4 (298 aa).

In terms of domain architecture, S1 motif spans 63–131 (GDVVIGKIKD…EVKKVKLGLK (69 aa)). A KH domain is found at 139 to 197 (RGGIIVDITPTKVPRLIGKKGSMINMIKDKTNCKIIVGQNGLVWVKGEEDMEQLTKDII). The disordered stretch occupies residues 276 to 298 (KNKKDKPLSYGNNSGNSYILNNR). The span at 285 to 298 (YGNNSGNSYILNNR) shows a compositional bias: polar residues.

It belongs to the RRP4 family. As to quaternary structure, component of the archaeal exosome complex. Forms a trimer of Rrp4 and/or Csl4 subunits. The trimer associates with a hexameric ring-like arrangement composed of 3 Rrp41-Rrp42 heterodimers.

The protein resides in the cytoplasm. Functionally, non-catalytic component of the exosome, which is a complex involved in RNA degradation. Increases the RNA binding and the efficiency of RNA degradation. Confers strong poly(A) specificity to the exosome. The chain is Exosome complex component Rrp4 from Methanobrevibacter smithii (strain ATCC 35061 / DSM 861 / OCM 144 / PS).